A 219-amino-acid polypeptide reads, in one-letter code: Segregation and condensation protein B (219 aa).

Residues 193–219 (SLFAGGEEPSAEAADGGAGESTHGEEE) are disordered. Positions 196–207 (AGGEEPSAEAAD) are enriched in low complexity.

This sequence belongs to the ScpB family. As to quaternary structure, homodimer. Homodimerization may be required to stabilize the binding of ScpA to the Smc head domains. Component of a cohesin-like complex composed of ScpA, ScpB and the Smc homodimer, in which ScpA and ScpB bind to the head domain of Smc. The presence of the three proteins is required for the association of the complex with DNA.

The protein localises to the cytoplasm. Its function is as follows. Participates in chromosomal partition during cell division. May act via the formation of a condensin-like complex containing Smc and ScpA that pull DNA away from mid-cell into both cell halves. This chain is Segregation and condensation protein B, found in Symbiobacterium thermophilum (strain DSM 24528 / JCM 14929 / IAM 14863 / T).